A 172-amino-acid chain; its full sequence is NAD(P)H-quinone oxidoreductase subunit I, chloroplastic (172 aa).

2 consecutive 4Fe-4S ferredoxin-type domains span residues 55–84 (GRIH…VDWK) and 95–124 (LNYS…MTEE). Positions 64, 67, 70, 74, 104, 107, 110, and 114 each coordinate [4Fe-4S] cluster.

It belongs to the complex I 23 kDa subunit family. In terms of assembly, NDH is composed of at least 16 different subunits, 5 of which are encoded in the nucleus. The cofactor is [4Fe-4S] cluster.

It localises to the plastid. It is found in the chloroplast thylakoid membrane. The catalysed reaction is a plastoquinone + NADH + (n+1) H(+)(in) = a plastoquinol + NAD(+) + n H(+)(out). The enzyme catalyses a plastoquinone + NADPH + (n+1) H(+)(in) = a plastoquinol + NADP(+) + n H(+)(out). Functionally, NDH shuttles electrons from NAD(P)H:plastoquinone, via FMN and iron-sulfur (Fe-S) centers, to quinones in the photosynthetic chain and possibly in a chloroplast respiratory chain. The immediate electron acceptor for the enzyme in this species is believed to be plastoquinone. Couples the redox reaction to proton translocation, and thus conserves the redox energy in a proton gradient. The sequence is that of NAD(P)H-quinone oxidoreductase subunit I, chloroplastic from Capsella bursa-pastoris (Shepherd's purse).